Reading from the N-terminus, the 359-residue chain is Histidinol-phosphate aminotransferase (359 aa).

The residue at position 212 (lysine 212) is an N6-(pyridoxal phosphate)lysine.

It belongs to the class-II pyridoxal-phosphate-dependent aminotransferase family. Histidinol-phosphate aminotransferase subfamily. As to quaternary structure, homodimer. It depends on pyridoxal 5'-phosphate as a cofactor.

It carries out the reaction L-histidinol phosphate + 2-oxoglutarate = 3-(imidazol-4-yl)-2-oxopropyl phosphate + L-glutamate. The protein operates within amino-acid biosynthesis; L-histidine biosynthesis; L-histidine from 5-phospho-alpha-D-ribose 1-diphosphate: step 7/9. In Buchnera aphidicola subsp. Melaphis rhois, this protein is Histidinol-phosphate aminotransferase.